Consider the following 469-residue polypeptide: MSAVLTPAGFTDYKVADISLADWGRKELIIAESEMPALMGLRRKYAASQPLKGAKILGCIHMTIQTGVLIETLTALGAEVRWSSCNIFSTQDQAAAAIAAAGIPVFAWKGETEEEYEWCIEQTILKDGKPWDANMVLDDGGDLTEILHKKYPQMLERIHGITEETTTGVHRLLDMLKAGTLKVPAINVNDAVTKSKNDNKYGCRHSLNDAIKRGTDHLLSGKQALVIGYGDVGKGSAQSLRQEGMIVKVSEIDPICAMQACMDGFELVSPYKNGINDGTESSVDAALLGKIDLIVTTTGNVNVCDAGMLKALKKRAVVCNIGHFDNEIDTAFMRKNWAWEEVKPQVHKIHRTGAGQFDPTNDDYLILLAEGRLVNLGNATGHPSRIMDGSFANQVLAQIFLFEQKFADLPAEKKAERLTVEVLPKKLDEEVALEMVKGFGGVVTQLTKQQAEYIGVTVEGPFKPDTYRY.

The substrate site is built by Thr-63, Asp-139, and Glu-164. 165-167 (TTT) is an NAD(+) binding site. The substrate site is built by Lys-194 and Asp-198. NAD(+)-binding positions include Asn-199, 228-233 (GYGDVG), Glu-251, Asn-300, 321-323 (IGH), and Asn-375.

Belongs to the adenosylhomocysteinase family. It depends on NAD(+) as a cofactor.

The protein localises to the cytoplasm. The enzyme catalyses S-adenosyl-L-homocysteine + H2O = L-homocysteine + adenosine. Its pathway is amino-acid biosynthesis; L-homocysteine biosynthesis; L-homocysteine from S-adenosyl-L-homocysteine: step 1/1. Its function is as follows. May play a key role in the regulation of the intracellular concentration of adenosylhomocysteine. The polypeptide is Adenosylhomocysteinase (Ectopseudomonas mendocina (strain ymp) (Pseudomonas mendocina)).